An 855-amino-acid polypeptide reads, in one-letter code: DNA mismatch repair protein MutS (855 aa).

ATP is bound at residue 616 to 623 (GPNMGGKS).

This sequence belongs to the DNA mismatch repair MutS family.

This protein is involved in the repair of mismatches in DNA. It is possible that it carries out the mismatch recognition step. This protein has a weak ATPase activity. The chain is DNA mismatch repair protein MutS from Salmonella paratyphi A (strain ATCC 9150 / SARB42).